The sequence spans 513 residues: Probable DNA ligase (513 aa).

Residue Glu-213 coordinates ATP. Lys-215 acts as the N6-AMP-lysine intermediate in catalysis. ATP is bound by residues Arg-220, Arg-235, Glu-264, Phe-304, Arg-376, and Lys-382.

Belongs to the ATP-dependent DNA ligase family. Mg(2+) serves as cofactor.

The catalysed reaction is ATP + (deoxyribonucleotide)n-3'-hydroxyl + 5'-phospho-(deoxyribonucleotide)m = (deoxyribonucleotide)n+m + AMP + diphosphate.. In terms of biological role, DNA ligase that seals nicks in double-stranded DNA during DNA replication, DNA recombination and DNA repair. The polypeptide is Probable DNA ligase (Anaeromyxobacter sp. (strain K)).